A 199-amino-acid polypeptide reads, in one-letter code: Shikimate kinase (199 aa).

Residue Gly14 to Thr19 participates in ATP binding. Ser18 lines the Mg(2+) pocket. Residues Asp36, Arg60, and Gly82 each contribute to the substrate site. Residue Arg120 participates in ATP binding. Residue Arg147 participates in substrate binding. A disordered region spans residues Tyr179–Lys199.

The protein belongs to the shikimate kinase family. As to quaternary structure, monomer. Requires Mg(2+) as cofactor.

The protein localises to the cytoplasm. The catalysed reaction is shikimate + ATP = 3-phosphoshikimate + ADP + H(+). It participates in metabolic intermediate biosynthesis; chorismate biosynthesis; chorismate from D-erythrose 4-phosphate and phosphoenolpyruvate: step 5/7. In terms of biological role, catalyzes the specific phosphorylation of the 3-hydroxyl group of shikimic acid using ATP as a cosubstrate. The sequence is that of Shikimate kinase from Chlorobium phaeobacteroides (strain BS1).